A 511-amino-acid chain; its full sequence is IWS1-like protein (511 aa).

The segment at 1-200 (MSDHEEESHG…DDGPVDRHGR (200 aa)) is disordered. 2 stretches are compositionally biased toward low complexity: residues 11 to 30 (ASPT…PISP) and 55 to 86 (APAS…SPVK). Acidic residues predominate over residues 94 to 103 (DSDEDSDAEE). Basic and acidic residues predominate over residues 134-143 (HEGTSKKEPT). The segment covering 166-179 (LDEFVEGRDEEESQ) has biased composition (acidic residues). A TFIIS N-terminal domain is found at 294–374 (SALSEWLAPL…GEWARPIYHL (81 aa)). The segment at 382 to 454 (SRQEREERDY…RARVPKPSTK (73 aa)) is disordered. Basic and acidic residues-rich tracts occupy residues 383–395 (RQER…SRMP) and 414–425 (DQPKRPRIRDAD).

It belongs to the IWS1 family.

The protein resides in the nucleus. This Caenorhabditis elegans protein is IWS1-like protein.